A 573-amino-acid polypeptide reads, in one-letter code: ATP-dependent RNA helicase RhlB (573 aa).

Residues 9–37 (LTFSSFDLHPALVAGLESAGFTRCTPIQA) carry the Q motif motif. Positions 40 to 220 (LPVALPGGDV…YEHMNEPEKL (181 aa)) constitute a Helicase ATP-binding domain. 53–60 (AQTGTGKT) contributes to the ATP binding site. The DEAD box motif lies at 166–169 (DEAD). Residues 231-393 (RVRQRIYFPS…PVTTELLTPL (163 aa)) form the Helicase C-terminal domain. The segment covering 391–400 (TPLPRTPRAT) has biased composition (low complexity). The tract at residues 391 to 559 (TPLPRTPRAT…AKPSGSPSLL (169 aa)) is disordered. Over residues 402–411 (EGEEVDDDAG) the composition is skewed to acidic residues. The span at 419 to 432 (REAREQRAADEARR) shows a compositional bias: basic and acidic residues. Residues 435-449 (GRSGPGGASRSGSGG) are compositionally biased toward gly residues. A compositionally biased stretch (basic and acidic residues) spans 450–461 (GRRDGAGADGKP). Positions 476–499 (PAAAPSETPVVVAAAAETPAVTAA) are enriched in low complexity. Residues 505–514 (PRKRRRRRNG) are compositionally biased toward basic residues. Composition is skewed to low complexity over residues 516–528 (PVEG…ASTP) and 541–559 (VVAK…PSLL).

Belongs to the DEAD box helicase family. RhlB subfamily. In terms of assembly, component of the RNA degradosome, which is a multiprotein complex involved in RNA processing and mRNA degradation.

The protein resides in the cytoplasm. The catalysed reaction is ATP + H2O = ADP + phosphate + H(+). In terms of biological role, DEAD-box RNA helicase involved in RNA degradation. Has RNA-dependent ATPase activity and unwinds double-stranded RNA. The polypeptide is ATP-dependent RNA helicase RhlB (Xanthomonas campestris pv. campestris (strain B100)).